A 106-amino-acid polypeptide reads, in one-letter code: UPF0145 protein APL_0465 (106 aa).

This sequence belongs to the UPF0145 family.

In Actinobacillus pleuropneumoniae serotype 5b (strain L20), this protein is UPF0145 protein APL_0465.